The sequence spans 241 residues: Methylthioribulose-1-phosphate dehydratase (241 aa).

Cys102 is a binding site for substrate. Positions 120, 122, and 199 each coordinate Zn(2+).

The protein belongs to the aldolase class II family. MtnB subfamily. Requires Zn(2+) as cofactor.

The protein resides in the cytoplasm. The enzyme catalyses 5-(methylsulfanyl)-D-ribulose 1-phosphate = 5-methylsulfanyl-2,3-dioxopentyl phosphate + H2O. It participates in amino-acid biosynthesis; L-methionine biosynthesis via salvage pathway; L-methionine from S-methyl-5-thio-alpha-D-ribose 1-phosphate: step 2/6. Catalyzes the dehydration of methylthioribulose-1-phosphate (MTRu-1-P) into 2,3-diketo-5-methylthiopentyl-1-phosphate (DK-MTP-1-P). The polypeptide is Methylthioribulose-1-phosphate dehydratase (Coprinopsis cinerea (strain Okayama-7 / 130 / ATCC MYA-4618 / FGSC 9003) (Inky cap fungus)).